We begin with the raw amino-acid sequence, 403 residues long: Enoyl-[acyl-carrier-protein] reductase [NADH] (403 aa).

Residues 49–54, 75–76, 112–113, and 141–142 contribute to the NAD(+) site; these read GASSGY, FE, DA, and LA. Residue tyrosine 227 participates in substrate binding. Tyrosine 237 serves as the catalytic Proton donor. NAD(+)-binding positions include lysine 246 and 276 to 278; that span reads VVT.

The protein belongs to the TER reductase family. Monomer.

The catalysed reaction is a 2,3-saturated acyl-[ACP] + NAD(+) = a (2E)-enoyl-[ACP] + NADH + H(+). The protein operates within lipid metabolism; fatty acid biosynthesis. Involved in the final reduction of the elongation cycle of fatty acid synthesis (FAS II). Catalyzes the reduction of a carbon-carbon double bond in an enoyl moiety that is covalently linked to an acyl carrier protein (ACP). This is Enoyl-[acyl-carrier-protein] reductase [NADH] from Pseudomonas putida (strain ATCC 47054 / DSM 6125 / CFBP 8728 / NCIMB 11950 / KT2440).